Here is an 865-residue protein sequence, read N- to C-terminus: SWI/SNF chromatin-remodeling complex subunit sol1 (865 aa).

Disordered regions lie at residues 1–34, 54–92, 116–143, and 163–183; these read MNNQGFVPASDYPTAVSYPTQGQSYNTQEEQPAY, MMNTSENEPNNLAHSQPFRQSPSTQRNLPNQSFDFASNG, QEKEAAMQQQQQQQQQQQLYQRQMQSRE, and VRQTPQPAPSPNTPSGNANQL. The span at 17 to 30 shows a compositional bias: polar residues; sequence SYPTQGQSYNTQEE. Over residues 121–139 the composition is skewed to low complexity; the sequence is AMQQQQQQQQQQQLYQRQM. Residues 188–278 enclose the ARID domain; it reads AASFDKFMVS…YLLPYEEAWL (91 aa). Residues 288 to 380 are disordered; that stretch reads QQAKANHSAN…QTSSSAAPVD (93 aa). Residues 328 to 353 are compositionally biased toward polar residues; it reads HSKSPSPAFTANRFSPAAPTTVSSER. The segment covering 356–368 has biased composition (pro residues); that stretch reads PPYPSAPTRPTPP. Residues S852 and S855 each carry the phosphoserine modification.

This sequence belongs to the SWI1 family. As to quaternary structure, component of the SWI/SNF global transcription activator complex composed of at least arp9, arp42, snf5, snf22, snf30, sbf59, sol1, ssr1, ssr2, ssr3, ssr4 and tfg3.

It is found in the nucleus. Component of the SWI/SNF complex, an ATP-dependent chromatin remodeling complex, required for the positive and negative regulation of gene expression of a large number of genes. It changes chromatin structure by altering DNA-histone contacts within a nucleosome, leading eventually to a change in nucleosome position, thus facilitating or repressing binding of gene-specific transcription factors. The protein is SWI/SNF chromatin-remodeling complex subunit sol1 (sol1) of Schizosaccharomyces pombe (strain 972 / ATCC 24843) (Fission yeast).